The chain runs to 332 residues: Endo-1,4-beta-xylanase B (332 aa).

Residues 2–331 enclose the GH10 domain; sequence STEIPSLSAS…KDSFWRIIGQ (330 aa). Glutamate 134 functions as the Proton donor in the catalytic mechanism. Glutamate 241 functions as the Nucleophile in the catalytic mechanism.

It belongs to the glycosyl hydrolase 10 (cellulase F) family. Cytoplasmic xylanase subfamily.

It is found in the cytoplasm. The catalysed reaction is Endohydrolysis of (1-&gt;4)-beta-D-xylosidic linkages in xylans.. It participates in glycan degradation; xylan degradation. Its activity is regulated as follows. Completely inhibited by Ag(2+), Cu(2+), Hg(2+), Mn(2+), Pb(2+) and Sn(2+). Strongly inhibited by Fe(2+) and Zn(2+). Co(2+) and Ni(2+) cause little inhibition while Ca(2+) and Mg(2+) do not affect enzyme activity, and Ba(2+) produces a small stimulating effect. Irreversibly inactivated by SDS in vitro. Plays a role in plant xylan biodegradation, probably via the hydrolysis of short xylooligosaccharides resulting from extracellular xylan hydrolysis, once they have been transported inside cells. Shows similar activity on xylans of different rate of arabinose or methylglucuronic substitution. Also displays high activity on aryl-xylosides. Is active on xylotetraose and xylotriose, but does not hydrolyze xylobiose, indicating that XynB is a xylanase and not a beta-xylosidase. This is Endo-1,4-beta-xylanase B (xynB) from Paenibacillus barcinonensis.